We begin with the raw amino-acid sequence, 1462 residues long: Trifunctional nucleotide phosphoesterase protein YfkN (1462 aa).

An N-terminal signal peptide occupies residues 1 to 35 (MRIQKRRTHVENILRILLPPIMILSLILPTPPIHA). Residues 36–623 (EESAAPQVHL…GTNLTFESSL (588 aa)) form a 2',3'-cyclic nucleotide 2'-phosphodiesterase/3'-nucleotidase region. The a divalent metal cation site is built by Asp-52, His-54, Asp-97, Asn-141, His-249, His-282, and His-284. A ribonucleoside 3'-phosphate-binding positions include Tyr-458 and 561-567 (YRASGGG). Positions 624–1427 (LAKPFADKAD…GPAGGLLPDT (804 aa)) are 5'-nucleotidase. The a divalent metal cation site is built by Asp-676, His-678, Asp-708, Asn-740, His-872, His-895, and His-897. A ribonucleoside 5'-phosphate-binding positions include Phe-1047 and 1127–1133 (FVGAGGD). A disordered region spans residues 1350-1422 (ILNSGSNNKP…GSGTDGPAGG (73 aa)). The span at 1405-1421 (GSGGNGSGGSGTDGPAG) shows a compositional bias: gly residues. The short motif at 1424-1428 (LPDTA) is the LPXTG sorting signal element. Thr-1427 carries the post-translational modification Pentaglycyl murein peptidoglycan amidated threonine. A propeptide spans 1428–1462 (ATSMYSILLAGFLISALGTAMYLHQRRKQNRANQA) (removed by sortase).

This sequence belongs to the 5'-nucleotidase family. A divalent metal cation serves as cofactor.

Its subcellular location is the secreted. The protein resides in the cell wall. It carries out the reaction a nucleoside 2',3'-cyclic phosphate + H2O = a nucleoside 3'-phosphate + H(+). The enzyme catalyses a ribonucleoside 3'-phosphate + H2O = a ribonucleoside + phosphate. The catalysed reaction is a ribonucleoside 5'-phosphate + H2O = a ribonucleoside + phosphate. Its function is as follows. Catalyzes the release of inorganic phosphate from 2',3'-cyclic nucleotides through consecutive 2',3'-phosphodiesterase and 3'- (or 2') nucleotidase activities. Also possesses a 5'-nucleotidase activity. Does not catalyze the release of inorganic phosphate from 3',5'-cyclic nucleotides. Probably plays a role in the cellular reprocessing of nucleotides present in the medium, under conditions of phosphate shortage. The chain is Trifunctional nucleotide phosphoesterase protein YfkN (yfkN) from Bacillus subtilis (strain 168).